A 240-amino-acid polypeptide reads, in one-letter code: MGLEVAADSVASALAAQAGGAMRVELCGGLDGGGLTPSFGTLAVVRERLRIPLYVLIRPRVGDFVFDAAEVEVMRRDVEQCVRLGCDGVVLGALDRHGQVDLATMRVLMQAAGSLGVTFHRAIDVSADPSRVLEDAIALGCERVLTSGARASALEGIDTIAALVRQAAGRIGIMPGAGLSEHNIRALRQHTGAHEFHASARGVIAAQVPSPHPYIRDLGGDYQRTDTARVQRMVDALQQA.

Belongs to the CutC family.

The protein localises to the cytoplasm. The polypeptide is PF03932 family protein CutC (Xanthomonas axonopodis pv. citri (strain 306)).